A 383-amino-acid chain; its full sequence is MTEPAKREDSGLPEAVTAIRPEVAAFKPYAPGLSIDEIKERYGLSQVVKMASNENPLGTSPLVQQTLRTHADLAFRYVQSGNPRLVSAIARSFGVAAESVVTGNGSDEVIDLIIRVKARPGKHNIVAFNPCFSMYELQTRFCGVEFRQVPLRADFSFDYDAFVGAADADTAVAFITTPDNPSGYCPPVEEIIDLARRLPSSCLLVVDEAYMDFADDPAAHSVLPHLTEFPNVAVLRTFSKSYGLAGLRLGFGVMHPALADYVKRVRLPFSINILAEYAGIAALQDTTFHAQTLRVTREGRTYLTGALTEAGCTVYPSAANFIMFALPENCPHDARAVFEALLRRGIIIRPLSSYNLPQCLRVSIGNRHENELFIAQFKELLRG.

The residue at position 240 (K240) is an N6-(pyridoxal phosphate)lysine.

Belongs to the class-II pyridoxal-phosphate-dependent aminotransferase family. Histidinol-phosphate aminotransferase subfamily. In terms of assembly, homodimer. The cofactor is pyridoxal 5'-phosphate.

The enzyme catalyses L-histidinol phosphate + 2-oxoglutarate = 3-(imidazol-4-yl)-2-oxopropyl phosphate + L-glutamate. It functions in the pathway amino-acid biosynthesis; L-histidine biosynthesis; L-histidine from 5-phospho-alpha-D-ribose 1-diphosphate: step 7/9. The sequence is that of Histidinol-phosphate aminotransferase from Oleidesulfovibrio alaskensis (strain ATCC BAA-1058 / DSM 17464 / G20) (Desulfovibrio alaskensis).